Reading from the N-terminus, the 331-residue chain is DNA-directed RNA polymerase subunit alpha (331 aa).

The segment at 1 to 230 (MKNIKTSPYI…KQMSVFNSEW (230 aa)) is alpha N-terminal domain (alpha-NTD). The alpha C-terminal domain (alpha-CTD) stretch occupies residues 247 to 331 (LKPLLQKIEA…ALQKRLNKLK (85 aa)).

It belongs to the RNA polymerase alpha chain family. Homodimer. The RNAP catalytic core consists of 2 alpha, 1 beta/beta' and 1 omega subunit. When a sigma factor is associated with the core the holoenzyme is formed, which can initiate transcription.

It catalyses the reaction RNA(n) + a ribonucleoside 5'-triphosphate = RNA(n+1) + diphosphate. Its function is as follows. DNA-dependent RNA polymerase catalyzes the transcription of DNA into RNA using the four ribonucleoside triphosphates as substrates. The sequence is that of DNA-directed RNA polymerase subunit alpha from Wolinella succinogenes (strain ATCC 29543 / DSM 1740 / CCUG 13145 / JCM 31913 / LMG 7466 / NCTC 11488 / FDC 602W) (Vibrio succinogenes).